The primary structure comprises 254 residues: Aquaporin TIP1-2 (254 aa).

The next 2 membrane-spanning stretches (helical) occupy residues 24–44 (VAEF…GMAF) and 56–76 (AGLI…VSVG). The NPA 1 signature appears at 85–87 (NPA). 3 consecutive transmembrane segments (helical) span residues 103-123 (ALVY…LLKI), 144-164 (AVVL…ATAV), and 173-193 (VIAP…GGAF). The NPA 2 signature appears at 199–201 (NPA). Residues 220–240 (WVGPLAGAAIAALVYDIIFIG) form a helical membrane-spanning segment.

The protein belongs to the MIP/aquaporin (TC 1.A.8) family. TIP (TC 1.A.8.10) subfamily.

The protein resides in the vacuole membrane. In terms of biological role, aquaporins facilitate the transport of water and small neutral solutes across cell membranes. The polypeptide is Aquaporin TIP1-2 (TIP1-2) (Zea mays (Maize)).